The primary structure comprises 214 residues: MAGENFATPFHGHVGRGAFSDVYEPAEDTFLLLDALEAAAAELAGVEICLEVGSGSGVVSAFLASMIGPQALYMCTDINPEAAACTLETARCNKVHIQPVITDLVKGLLPRLTEKVDLLVFNPPYVVTPPQEVGSHGIEAAWAGGRNGREVMDRFFPLVPDLLSPRGLFYLVTIKENNPEEILKIMKTKGLQGTTALSRQAGQETLSVLKFTKS.

Residues T29, E51, G53, D77, D103, L104, and N122 each coordinate S-adenosyl-L-homocysteine. 7 residues coordinate S-adenosyl-L-methionine: T29, E51, G53, D77, D103, L104, and N122. N122 contributes to the a protein binding site.

The protein belongs to the eukaryotic/archaeal PrmC-related family. Heterodimer; heterodimerization with TRMT112 is required for S-adenosyl-L-methionine-binding. As to quaternary structure, does not interact with TRMT112. In terms of processing, ubiquitinated, leading to its degradation by the proteasome. Widely expressed, with highest expression in parathyroid and pituitary glands, followed by adrenal gland and kidney, and lowest expression in leukocytes and mammary gland.

It localises to the nucleus. It carries out the reaction L-lysyl-[histone] + S-adenosyl-L-methionine = N(6)-methyl-L-lysyl-[histone] + S-adenosyl-L-homocysteine + H(+). The catalysed reaction is L-glutaminyl-[protein] + S-adenosyl-L-methionine = N(5)-methyl-L-glutaminyl-[protein] + S-adenosyl-L-homocysteine + H(+). The enzyme catalyses methylarsonous acid + S-adenosyl-L-methionine = dimethylarsinate + S-adenosyl-L-homocysteine + 2 H(+). Its function is as follows. Methyltransferase that can methylate proteins and, to a lower extent, arsenic. Catalytic subunit of a heterodimer with TRMT112, which monomethylates 'Lys-12' of histone H4 (H4K12me1), a modification present at the promoters of numerous genes encoding cell cycle regulators. Catalytic subunit of a heterodimer with TRMT112, which catalyzes N5-methylation of Glu residue of proteins with a Gly-Gln-Xaa-Xaa-Xaa-Arg motif. Methylates ETF1 on 'Gln-185'; ETF1 needs to be complexed to ERF3 in its GTP-bound form to be efficiently methylated. May also play a role in the modulation of arsenic-induced toxicity by mediating the conversion of monomethylarsonous acid (3+) into the less toxic dimethylarsonic acid. It however only plays a limited role in arsenic metabolism compared with AS3MT. The sequence is that of Methyltransferase HEMK2 from Homo sapiens (Human).